A 329-amino-acid chain; its full sequence is GTPase Obg (329 aa).

The region spanning 1 to 159 is the Obg domain; it reads MQFIDYAEIE…RWLRLELKLL (159 aa). An OBG-type G domain is found at 160–328; sequence AEVGIIGLPN…LLQIVWQLLD (169 aa). GTP is bound by residues 166 to 173, 191 to 195, 213 to 216, 280 to 283, and 309 to 311; these read GLPNAGKS, FTTLV, DIPG, NKMD, and SGV. Positions 173 and 193 each coordinate Mg(2+).

The protein belongs to the TRAFAC class OBG-HflX-like GTPase superfamily. OBG GTPase family. As to quaternary structure, monomer. Requires Mg(2+) as cofactor.

Its subcellular location is the cytoplasm. Its function is as follows. An essential GTPase which binds GTP, GDP and possibly (p)ppGpp with moderate affinity, with high nucleotide exchange rates and a fairly low GTP hydrolysis rate. Plays a role in control of the cell cycle, stress response, ribosome biogenesis and in those bacteria that undergo differentiation, in morphogenesis control. This Rippkaea orientalis (strain PCC 8801 / RF-1) (Cyanothece sp. (strain PCC 8801)) protein is GTPase Obg.